Consider the following 496-residue polypeptide: Protein disulfide-isomerase (496 aa).

The N-terminal stretch at 1 to 18 is a signal peptide; sequence MKFLICALFLAASYVAAS. Thioredoxin domains follow at residues 19–134 and 349–474; these read AEAE…KKTG and GKLK…ANGE. Residues Cys-56, Cys-59, Cys-397, and Cys-400 each act as nucleophile in the active site. 2 disulfide bridges follow: Cys-56/Cys-59 and Cys-397/Cys-400. The tract at residues 473-496 is disordered; sequence GEVADSEPVEETEEEEEAPKKDEL. The span at 476–489 shows a compositional bias: acidic residues; that stretch reads ADSEPVEETEEEEE. Positions 493–496 match the Prevents secretion from ER motif; that stretch reads KDEL.

This sequence belongs to the protein disulfide isomerase family. As to quaternary structure, homodimer. Expressed in all head and body tissues.

It is found in the endoplasmic reticulum lumen. It catalyses the reaction Catalyzes the rearrangement of -S-S- bonds in proteins.. In terms of biological role, participates in the folding of proteins containing disulfide bonds. This is Protein disulfide-isomerase (Pdi) from Drosophila melanogaster (Fruit fly).